Here is a 245-residue protein sequence, read N- to C-terminus: 4-hydroxy-tetrahydrodipicolinate reductase (245 aa).

NAD(+)-binding positions include 7–12, 75–77, and 102–105; these read GAKGKV, GTT, and APNF. His132 serves as the catalytic Proton donor/acceptor. His133 lines the (S)-2,3,4,5-tetrahydrodipicolinate pocket. Lys136 acts as the Proton donor in catalysis. 142–143 serves as a coordination point for (S)-2,3,4,5-tetrahydrodipicolinate; that stretch reads GT.

The protein belongs to the DapB family.

Its subcellular location is the cytoplasm. It carries out the reaction (S)-2,3,4,5-tetrahydrodipicolinate + NAD(+) + H2O = (2S,4S)-4-hydroxy-2,3,4,5-tetrahydrodipicolinate + NADH + H(+). The enzyme catalyses (S)-2,3,4,5-tetrahydrodipicolinate + NADP(+) + H2O = (2S,4S)-4-hydroxy-2,3,4,5-tetrahydrodipicolinate + NADPH + H(+). The protein operates within amino-acid biosynthesis; L-lysine biosynthesis via DAP pathway; (S)-tetrahydrodipicolinate from L-aspartate: step 4/4. In terms of biological role, catalyzes the conversion of 4-hydroxy-tetrahydrodipicolinate (HTPA) to tetrahydrodipicolinate. The protein is 4-hydroxy-tetrahydrodipicolinate reductase of Mycolicibacterium gilvum (strain PYR-GCK) (Mycobacterium gilvum (strain PYR-GCK)).